The sequence spans 111 residues: Cytochrome c (111 aa).

Ala1 carries the post-translational modification N-acetylalanine. Heme c-binding residues include Cys22, Cys25, and His26. An N6,N6,N6-trimethyllysine modification is found at Lys80. A heme c-binding site is contributed by Met88. Lys94 is subject to N6,N6,N6-trimethyllysine.

This sequence belongs to the cytochrome c family. Binds 1 heme c group covalently per subunit.

Its subcellular location is the mitochondrion intermembrane space. Its function is as follows. Electron carrier protein. The oxidized form of the cytochrome c heme group can accept an electron from the heme group of the cytochrome c1 subunit of cytochrome reductase. Cytochrome c then transfers this electron to the cytochrome oxidase complex, the final protein carrier in the mitochondrial electron-transport chain. The sequence is that of Cytochrome c from Vigna radiata var. radiata (Mung bean).